Here is a 471-residue protein sequence, read N- to C-terminus: MTIEAEVLAYKVADMSLAEWGRKEIDIAEKEMPGLMATRKKYAGQKPLKGARIAGSLHMTIQTAVLIETLVELGADVRWASCNIFSTQDHAAAAIAKAGIPVFAWKGETLDEYWWCTRQILEFEGGKGPHLIVDDGGDATLMIHLGYKIEIDPSLLDKTPGNIEEKALFQQLREVYEEDSQRWHNVAAEMKGVSEETTTGVHRLYQMMEKEELLFPAINVNDSVTKSKFDNLYGCRESLADGIKRATDVMVAGKVVVVLGYGDVGKGSARSMRAYGARVIVTEIDPICALQAAMEGYEVNTMDEAVTEGNIFVTTTGNKDVITLEHMKKMKGEAIICNIGHFDNEIQVEPLNNYAGATKLNIKPQVDKYTFEDGHAIYLLAEGRLVNLGCATGHPSFVMSNSFTNQTLAQLELWTRDYAIDVYRLPKQLDEEVARLHLEQLGVKLTTLTNEQAEYIGVPLEGPYKPEHYRY.

Residues T60, D135, and E196 each coordinate substrate. An NAD(+)-binding site is contributed by 197–199 (TTT). The substrate site is built by K226 and D230. NAD(+) contacts are provided by residues N231, 260-265 (GYGDVG), E283, N318, 339-341 (IGH), and N387.

The protein belongs to the adenosylhomocysteinase family. NAD(+) serves as cofactor.

It localises to the cytoplasm. It catalyses the reaction S-adenosyl-L-homocysteine + H2O = L-homocysteine + adenosine. It participates in amino-acid biosynthesis; L-homocysteine biosynthesis; L-homocysteine from S-adenosyl-L-homocysteine: step 1/1. Functionally, may play a key role in the regulation of the intracellular concentration of adenosylhomocysteine. In Chlorobium phaeobacteroides (strain DSM 266 / SMG 266 / 2430), this protein is Adenosylhomocysteinase.